We begin with the raw amino-acid sequence, 1165 residues long: MLEGPILAVSRQTKSVVDIPGAPQRYSFAKVSAPIEVPGLLDLQLDSYSWLIGTPEWRARQKEEFGEGARVTSGLENILEELSPIQDYSGNMSLSLSEPRFEDVKNTIDEAKEKDINYAAPLYVTAEFVNNTTGEIKSQTVFIGDFPMMTDKGTFIINGTERVVVSQLVRSPGVYFDQTIDKSTERPLHAVKVIPSRGAWLEFDVDKRDSVGVRIDRKRRQPVTVLLKALGWTTEQITERFGFSEIMMSTLESDGVANTDEALLEIYRKQRPGEQPTRDLAQSLLDNSFFRAKRYDLARVGRYKINRKLGLGGDHDGLMTLTEEDIATTIEYLVRLHAGERVMTSPNGEEIPVETDDIDHFGNRRLRTVGELIQNQVRVGLSRMERVVRERMTTQDAESITPTSLINVRPVSAAIREFFGTSQLSQFMDQNNSLSGLTHKRRLSALGPGGLSRERAGIEVRDVHPSHYGRMCPIETPEGPNIGLIGSLASYARVNPFGFIETPYRRIIDGKLTDQIDYLTADEEDRFVVAQANTHYDEEGNITDETVTVRLKDGDIAMVGRNAVDYMDVSPRQMVSVGTAMIPFLEHDDANRALMGANMQKQAVPLIRAEAPFVGTGMEQRAAYDAGDLVITPVAGVVENVSADFITIMADDGKRETYLLRKFQRTNQGTSYNQKPLVNLGERVEAGQVIADGPGTFNGEMSLGRNLLVAFMPWEGHNYEDAIILNQNIVEQDILTSIHIEEHEIDARDTKLGAEEITRDIPNVSEEVLKDLDDRGIVRIGADVRDGDILVGKVTPKGETELTPEERLLRAIFGEKAREVRDTSMKVPHGETGKVIGVRHFSREDDDDLAPGVNEMIRIYVAQKRKIQDGDKLAGRHGNKGVVGKILPQEDMPFLPDGTPVDIILNTHGVPRRMNIGQVLETHLGWLASAGWSVDPEDPENAELVKTLPADLLEVPAGSLTATPVFDGASNEELAGLLANSRPNRDGDVMVNADGKATLIDGRSGEPYPYPVSIGYMYMLKLHHLVDEKIHARSTGPYSMITQQPLGGKAQFGGQRFGEMEVWAMQAYGAAYTLQELLTIKSDDVVGRVKVYEAIVKGENIPDPGIPESFKVLLKELQSLCLNVEVLSADGTPMELAGDDDDFDQAGASLGINLSRDERSDADTA.

Belongs to the RNA polymerase beta chain family. As to quaternary structure, the RNAP catalytic core consists of 2 alpha, 1 beta, 1 beta' and 1 omega subunit. When a sigma factor is associated with the core the holoenzyme is formed, which can initiate transcription.

The catalysed reaction is RNA(n) + a ribonucleoside 5'-triphosphate = RNA(n+1) + diphosphate. Its function is as follows. DNA-dependent RNA polymerase catalyzes the transcription of DNA into RNA using the four ribonucleoside triphosphates as substrates. The polypeptide is DNA-directed RNA polymerase subunit beta (Corynebacterium glutamicum (strain ATCC 13032 / DSM 20300 / JCM 1318 / BCRC 11384 / CCUG 27702 / LMG 3730 / NBRC 12168 / NCIMB 10025 / NRRL B-2784 / 534)).